The following is a 201-amino-acid chain: Glycolipid transfer protein (201 aa).

Residues 28–168 (IATTQFLEAC…KDFYAKLGDD (141 aa)) are glycolipid transfer protein homology domain.

Functionally, cargo transport protein that plays a key role in transport and secretion of liamocins, glycolipids (also called heavy oils) composed of a single mannitol or arabitol headgroup linked to either three, four or even six 3,5-dihydroxydecanoic ester tail-groups. The chain is Glycolipid transfer protein from Aureobasidium melanogenum (Aureobasidium pullulans var. melanogenum).